A 674-amino-acid polypeptide reads, in one-letter code: Forkhead box protein P1 (674 aa).

Residues 1-19 (MMQESGTETKSNGSAIQNG) are compositionally biased toward polar residues. Residues 1–44 (MMQESGTETKSNGSAIQNGSSGGNHLLECGSLREGRSNGETPAV) form a disordered region. Serine 82 carries the phosphoserine modification. Residues 269–281 (MNPHASTNGQLSV) show a composition bias toward polar residues. Positions 269 to 296 (MNPHASTNGQLSVHTPKRESLSHEEHPH) are disordered. A compositionally biased stretch (basic and acidic residues) spans 284-296 (PKRESLSHEEHPH). Residue lysine 285 forms a Glycyl lysine isopeptide (Lys-Gly) (interchain with G-Cter in SUMO2) linkage. The segment at 304–329 (GVCKWPGCEAVCEDFQSFLKHLNSEH) adopts a C2H2-type zinc-finger fold. The leucine-zipper stretch occupies residues 346-367 (VQQLELQLAKDKERLQAMMTHL). Residues lysine 370 and lysine 375 each participate in a glycyl lysine isopeptide (Lys-Gly) (interchain with G-Cter in SUMO2) cross-link. Positions 380-384 (PLNLV) are CTBP1-binding. Polar residues predominate over residues 388–401 (TLSKSASEASPQSL). Residues 388–427 (TLSKSASEASPQSLPHTPTTPTAPITPATQGPSVITTTSM) are disordered. The segment covering 402-419 (PHTPTTPTAPITPATQGP) has biased composition (low complexity). A Glycyl lysine isopeptide (Lys-Gly) (interchain with G-Cter in SUMO2) cross-link involves residue lysine 440. A DNA-binding region (fork-head) is located at residues 462 to 552 (RPPFTYASLI…PQKISGNPSL (91 aa)). The interval 608–674 (EHTNSNESDS…EDEPVNEDME (67 aa)) is disordered. Positions 609–620 (HTNSNESDSSPG) are enriched in polar residues. Threonine 650 bears the Phosphothreonine mark. Position 655 is a phosphoserine (serine 655). Positions 664–674 (YEDEPVNEDME) are enriched in acidic residues.

In terms of assembly, forms homodimers and heterodimers with FOXP2 and FOXP4. Dimerization is required for DNA-binding. Self-associates. Interacts with CTBP1. Interacts with NCOR2 and AR. Interacts with FOXP2. Interacts with TBR1. Interacts with AURKA; this interaction facilitates the phosphorylation of FOXP1, which suppresses the expression of FBXL7. Interacts with ZMYM2.

Its subcellular location is the nucleus. Transcriptional repressor. Can act with CTBP1 to synergistically repress transcription but CTPBP1 is not essential. Plays an important role in the specification and differentiation of lung epithelium. Acts cooperatively with FOXP4 to regulate lung secretory epithelial cell fate and regeneration by restricting the goblet cell lineage program; the function may involve regulation of AGR2. Essential transcriptional regulator of B-cell development. Involved in regulation of cardiac muscle cell proliferation. Involved in the columnar organization of spinal motor neurons. Promotes the formation of the lateral motor neuron column (LMC) and the preganglionic motor column (PGC) and is required for respective appropriate motor axon projections. The segment-appropriate generation of spinal cord motor columns requires cooperation with other Hox proteins. Can regulate PITX3 promoter activity; may promote midbrain identity in embryonic stem cell-derived dopamine neurons by regulating PITX3. Negatively regulates the differentiation of T follicular helper cells T(FH)s. Involved in maintenance of hair follicle stem cell quiescence; the function probably involves regulation of FGF18. Represses transcription of various pro-apoptotic genes and cooperates with NF-kappa B-signaling in promoting B-cell expansion by inhibition of caspase-dependent apoptosis. Binds to CSF1R promoter elements and is involved in regulation of monocyte differentiation and macrophage functions; repression of CSF1R in monocytes seems to involve NCOR2 as corepressor. Involved in endothelial cell proliferation, tube formation and migration indicative for a role in angiogenesis; the role in neovascularization seems to implicate suppression of SEMA5B. Can negatively regulate androgen receptor signaling. Acts as a transcriptional activator of the FBXL7 promoter; this activity is regulated by AURKA. The sequence is that of Forkhead box protein P1 (FOXP1) from Bos taurus (Bovine).